A 38-amino-acid polypeptide reads, in one-letter code: Photosystem I reaction center subunit IX (38 aa).

Residues 6 to 26 (YLSTAPVVATLWLFLTAGILI) form a helical membrane-spanning segment.

Belongs to the PsaJ family.

It is found in the plastid. Its subcellular location is the chloroplast thylakoid membrane. May help in the organization of the PsaE and PsaF subunits. The protein is Photosystem I reaction center subunit IX of Cyanidioschyzon merolae (strain NIES-3377 / 10D) (Unicellular red alga).